The chain runs to 97 residues: Anti-sigma-YlaC factor YlaD (97 aa).

The Zn(2+) site is built by His-29, Cys-33, and Cys-36. Residues 71–93 traverse the membrane as a helical segment; that stretch reads YYGLLIMKAACWFGAAVAMMLII.

Belongs to the zinc-associated anti-sigma factor (ZAS) superfamily. Zn(2+) is required as a cofactor.

It localises to the cell membrane. Its function is as follows. Anti-sigma factor for YlaC. This is Anti-sigma-YlaC factor YlaD (ylaD) from Bacillus subtilis (strain 168).